The primary structure comprises 704 residues: Elongation factor G (704 aa).

One can recognise a tr-type G domain in the interval 8–290; that stretch reads EKYRNIGICA…GVVRYLPAPN (283 aa). GTP contacts are provided by residues 17-24, 88-92, and 142-145; these read AHVDAGKT, DTPGH, and NKMD.

The protein belongs to the TRAFAC class translation factor GTPase superfamily. Classic translation factor GTPase family. EF-G/EF-2 subfamily.

The protein resides in the cytoplasm. Functionally, catalyzes the GTP-dependent ribosomal translocation step during translation elongation. During this step, the ribosome changes from the pre-translocational (PRE) to the post-translocational (POST) state as the newly formed A-site-bound peptidyl-tRNA and P-site-bound deacylated tRNA move to the P and E sites, respectively. Catalyzes the coordinated movement of the two tRNA molecules, the mRNA and conformational changes in the ribosome. This is Elongation factor G from Francisella tularensis subsp. tularensis (strain FSC 198).